We begin with the raw amino-acid sequence, 614 residues long: UvrABC system protein C (614 aa).

A GIY-YIG domain is found at 20–98 (TAPGVYRMYA…IKSLSPRYNV (79 aa)). Positions 207–242 (DELTRELGEQMQAASEALEFEQAARLRDLISSLRSM) constitute a UVR domain.

The protein belongs to the UvrC family. Interacts with UvrB in an incision complex.

Its subcellular location is the cytoplasm. The UvrABC repair system catalyzes the recognition and processing of DNA lesions. UvrC both incises the 5' and 3' sides of the lesion. The N-terminal half is responsible for the 3' incision and the C-terminal half is responsible for the 5' incision. The chain is UvrABC system protein C from Stenotrophomonas maltophilia (strain K279a).